We begin with the raw amino-acid sequence, 234 residues long: DNA repair protein RecO (234 aa).

Belongs to the RecO family.

Involved in DNA repair and RecF pathway recombination. In Idiomarina loihiensis (strain ATCC BAA-735 / DSM 15497 / L2-TR), this protein is DNA repair protein RecO.